The following is a 268-amino-acid chain: Bis(5'-nucleosyl)-tetraphosphatase, symmetrical (268 aa).

Belongs to the Ap4A hydrolase family.

It catalyses the reaction P(1),P(4)-bis(5'-adenosyl) tetraphosphate + H2O = 2 ADP + 2 H(+). Its function is as follows. Hydrolyzes diadenosine 5',5'''-P1,P4-tetraphosphate to yield ADP. The protein is Bis(5'-nucleosyl)-tetraphosphatase, symmetrical of Nitrosomonas europaea (strain ATCC 19718 / CIP 103999 / KCTC 2705 / NBRC 14298).